Reading from the N-terminus, the 217-residue chain is Urease accessory protein UreG (217 aa).

Positions 1–18 are enriched in basic residues; that stretch reads MNAPHHPAHSTVRTKKLP. The segment at 1 to 24 is disordered; the sequence is MNAPHHPAHSTVRTKKLPPLRVGV. Residue 26–33 participates in GTP binding; it reads GPVGSGKT.

It belongs to the SIMIBI class G3E GTPase family. UreG subfamily. In terms of assembly, homodimer. UreD, UreF and UreG form a complex that acts as a GTP-hydrolysis-dependent molecular chaperone, activating the urease apoprotein by helping to assemble the nickel containing metallocenter of UreC. The UreE protein probably delivers the nickel.

The protein localises to the cytoplasm. In terms of biological role, facilitates the functional incorporation of the urease nickel metallocenter. This process requires GTP hydrolysis, probably effectuated by UreG. In Paraburkholderia xenovorans (strain LB400), this protein is Urease accessory protein UreG.